A 310-amino-acid chain; its full sequence is 5'-adenylylsulfate reductase-like 4 (310 aa).

The first 22 residues, Met1 to Ala22, serve as a signal peptide directing secretion. Residues Gly49–Gly168 form the Thioredoxin domain. 2 N-linked (GlcNAc...) asparagine glycosylation sites follow: Asn143 and Asn190. Residues Leu217–Phe237 form a helical membrane-spanning segment.

It localises to the membrane. In Arabidopsis thaliana (Mouse-ear cress), this protein is 5'-adenylylsulfate reductase-like 4 (APRL4).